The sequence spans 344 residues: Phosphoribosylformylglycinamidine cyclo-ligase (344 aa).

It belongs to the AIR synthase family.

Its subcellular location is the cytoplasm. It carries out the reaction 2-formamido-N(1)-(5-O-phospho-beta-D-ribosyl)acetamidine + ATP = 5-amino-1-(5-phospho-beta-D-ribosyl)imidazole + ADP + phosphate + H(+). It participates in purine metabolism; IMP biosynthesis via de novo pathway; 5-amino-1-(5-phospho-D-ribosyl)imidazole from N(2)-formyl-N(1)-(5-phospho-D-ribosyl)glycinamide: step 2/2. The polypeptide is Phosphoribosylformylglycinamidine cyclo-ligase (Glaesserella parasuis serovar 5 (strain SH0165) (Haemophilus parasuis)).